Consider the following 392-residue polypeptide: Putative glutamate--cysteine ligase 2 (392 aa).

The segment at 347 to 367 (AARKHGAAPEPGTRTRGDDGV) is disordered.

Belongs to the glutamate--cysteine ligase type 2 family. YbdK subfamily.

It catalyses the reaction L-cysteine + L-glutamate + ATP = gamma-L-glutamyl-L-cysteine + ADP + phosphate + H(+). In terms of biological role, ATP-dependent carboxylate-amine ligase which exhibits weak glutamate--cysteine ligase activity. The protein is Putative glutamate--cysteine ligase 2 of Corynebacterium jeikeium (strain K411).